A 1438-amino-acid chain; its full sequence is Pyochelin synthetase PchE (1438 aa).

One can recognise a Carrier 1 domain in the interval 6–85 (DSRTALRDWL…AWLDLLACAD (80 aa)). S46 is subject to O-(pantetheine 4'-phosphoryl)serine. Residues 136–442 (RTRDVDPQRL…ARRQGQPRSA (307 aa)) are condensation/cyclization. The adenylation stretch occupies residues 563–950 (RAAEAPDADA…GRVDQQVKVR (388 aa)). The region spanning 1350–1425 (EPLEAHEQAL…GLARHLQVQT (76 aa)) is the Carrier 2 domain. An O-(pantetheine 4'-phosphoryl)serine modification is found at S1385.

This sequence belongs to the NRP synthetase family. It depends on pantetheine 4'-phosphate as a cofactor.

The enzyme catalyses holo-[peptidyl-carrier protein] + L-cysteine + ATP = L-cysteinyl-[peptidyl-carrier protein] + AMP + diphosphate. Its pathway is siderophore biosynthesis. It participates in antifungal biosynthesis. Its function is as follows. Involved in the biosynthesis of the siderophore pyochelin. Accepts salicylate activated by PchD at the first peptidyl carrier domain (ArCP), and activates and fixes one molecule of cysteine at the second peptidyl carrier domain (PCP1) via a thioester linkage to the phosphopanthetheine moiety. Then catalyzes the condensation reaction between the salicylate bound to the first site and the cysteine bound to the second site, and the cyclization of the cysteine to form the salicyl-thiazolinyl-S-PCP1 intermediate at the second site. When this intermediate is released by the action of a thioesterase, it produces the antifungal antibiotic dihydroaeruginoic acid (Dha or hydroxyphenyl-thiazolinyl-carboxylate). The polypeptide is Pyochelin synthetase PchE (Pseudomonas aeruginosa (strain ATCC 15692 / DSM 22644 / CIP 104116 / JCM 14847 / LMG 12228 / 1C / PRS 101 / PAO1)).